Here is an 89-residue protein sequence, read N- to C-terminus: Small ribosomal subunit protein bS20 (89 aa).

Residues 1-12 (MANIKSAKKRVK) are compositionally biased toward basic residues. The disordered stretch occupies residues 1–20 (MANIKSAKKRVKQTVVRNER).

It belongs to the bacterial ribosomal protein bS20 family.

In terms of biological role, binds directly to 16S ribosomal RNA. This Xylella fastidiosa (strain 9a5c) protein is Small ribosomal subunit protein bS20.